Consider the following 568-residue polypeptide: Protein adenylyltransferase SelO, mitochondrial (568 aa).

Residues Gly-120, Gly-122, Arg-123, Lys-144, Asp-156, Gly-157, Arg-208, and Arg-215 each coordinate ATP. The active-site Proton acceptor is the Asp-287. Residues Asn-288 and Asp-297 each contribute to the Mg(2+) site. An ATP-binding site is contributed by Asp-297.

This sequence belongs to the SELO family. Mg(2+) is required as a cofactor. In terms of processing, forms probably one or more intrachain disulfide bridges.

It is found in the mitochondrion. The enzyme catalyses L-tyrosyl-[protein] + ATP = O-(5'-adenylyl)-L-tyrosyl-[protein] + diphosphate. Its function is as follows. Catalyzes the transfer of adenosine 5'-monophosphate (AMP) to Tyr residues of target mitochondrial proteins (AMPylation). Involved in redox homeostasis by regulating the cellular response to oxidative stress. Regulates protein S-glutathionylation levels possibly by AMPylation of deglutathionylation enzymes such as glutaredoxins. This Schizosaccharomyces pombe (strain 972 / ATCC 24843) (Fission yeast) protein is Protein adenylyltransferase SelO, mitochondrial.